The sequence spans 230 residues: Thymidylate kinase (230 aa).

G20–S27 contributes to the ATP binding site.

The protein belongs to the thymidylate kinase family.

It catalyses the reaction dTMP + ATP = dTDP + ADP. In terms of biological role, phosphorylation of dTMP to form dTDP in both de novo and salvage pathways of dTTP synthesis. This Nitrobacter hamburgensis (strain DSM 10229 / NCIMB 13809 / X14) protein is Thymidylate kinase.